The following is a 2475-amino-acid chain: Non-reducing polyketide synthase ausA (2475 aa).

Residues V14 to Q253 are N-terminal acylcarrier protein transacylase domain (SAT). The region spanning S384–E800 is the Ketosynthase family 3 (KS3) domain. Catalysis depends on for beta-ketoacyl synthase activity residues C549, H684, and H723. The malonyl-CoA:ACP transacylase (MAT) domain stretch occupies residues L910–A1212. The active-site For acyl/malonyl transferase activity is the S997. The interval E1279–D1407 is N-terminal hotdog fold. A PKS/mFAS DH domain is found at E1279–R1586. A product template (PT) domain region spans residues K1282–L1585. The active-site Proton acceptor; for dehydratase activity is the H1312. A C-terminal hotdog fold region spans residues S1435–R1586. The active-site Proton donor; for dehydratase activity is D1493. The 78-residue stretch at S1626 to R1703 folds into the Carrier domain. Residue S1663 is modified to O-(pantetheine 4'-phosphoryl)serine. The tract at residues Q1865 to N2098 is methyltransferase (CMeT) domain. Residues S2127–L2475 form a thioesterase (TE) domain region. Catalysis depends on for thioesterase activity residues S2250, D2412, and H2444.

It carries out the reaction 3 malonyl-CoA + acetyl-CoA + 2 S-adenosyl-L-methionine = 3,5-dimethylorsellinate + 2 S-adenosyl-L-homocysteine + 3 CO2 + 4 CoA. The protein operates within secondary metabolite biosynthesis; terpenoid biosynthesis. Functionally, non-reducing polyketide synthase; part of the gene cluster A that mediates the biosynthesis of the fungal meroterpenoid acetoxydehydroaustin. The first step of the pathway is the synthesis of 3,5-dimethylorsellinic acid by the polyketide synthase ausA. 3,5-dimethylorsellinic acid is then prenylated by the polyprenyl transferase ausN. Further epoxidation by the FAD-dependent monooxygenase ausM and cyclization by the probable terpene cyclase ausL lead to the formation of protoaustinoid A. Protoaustinoid A is then oxidized to spiro-lactone preaustinoid A3 by the combined action of the FAD-binding monooxygenases ausB and ausC, and the dioxygenase ausE. Acid-catalyzed keto-rearrangement and ring contraction of the tetraketide portion of preaustinoid A3 by ausJ lead to the formation of preaustinoid A4. The aldo-keto reductase ausK, with the help of ausH, is involved in the next step by transforming preaustinoid A4 into isoaustinone which is in turn hydroxylated by the P450 monooxygenase ausI to form austinolide. The cytochrome P450 monooxygenase ausG then modifies austinolide to austinol. Austinol is further acetylated to austin by the O-acetyltransferase ausP, which spontaneously changes to dehydroaustin. The cytochrome P450 monooxygenase then converts dehydroaustin is into 7-dehydrodehydroaustin. The hydroxylation catalyzed by ausR permits the second O-acetyltransferase ausQ to add an additional acetyl group to the molecule, leading to the formation of acetoxydehydroaustin. Due to genetic rearrangements of the clusters and the subsequent loss of some enzymes, the end product of the Penicillium brasilianum austinoid biosynthesis clusters is acetoxydehydroaustin. This Penicillium brasilianum protein is Non-reducing polyketide synthase ausA.